We begin with the raw amino-acid sequence, 707 residues long: Polyribonucleotide nucleotidyltransferase (707 aa).

Positions 488 and 494 each coordinate Mg(2+). In terms of domain architecture, KH spans proline 555–isoleucine 614. Residues glycine 624–lysine 692 form the S1 motif domain.

Belongs to the polyribonucleotide nucleotidyltransferase family. Mg(2+) serves as cofactor.

The protein localises to the cytoplasm. It catalyses the reaction RNA(n+1) + phosphate = RNA(n) + a ribonucleoside 5'-diphosphate. Involved in mRNA degradation. Catalyzes the phosphorolysis of single-stranded polyribonucleotides processively in the 3'- to 5'-direction. This Polaromonas sp. (strain JS666 / ATCC BAA-500) protein is Polyribonucleotide nucleotidyltransferase.